The chain runs to 551 residues: DNA double-strand break repair helicase HerA (551 aa).

ATP-binding positions include arginine 152, 161–166 (GAGKSN), and 507–508 (RI).

It belongs to the HerA family. Homohexamer. Interacts with NurA.

It catalyses the reaction Couples ATP hydrolysis with the unwinding of duplex DNA at the replication fork by translocating in the 5'-3' direction. This creates two antiparallel DNA single strands (ssDNA). The leading ssDNA polymer is the template for DNA polymerase III holoenzyme which synthesizes a continuous strand.. The catalysed reaction is ATP + H2O = ADP + phosphate + H(+). It carries out the reaction Couples ATP hydrolysis with the unwinding of duplex DNA by translocating in the 3'-5' direction.. Its activity is regulated as follows. Helicase activity is stimulated in the presence of NurA. Functionally, involved in DNA double-strand break (DSB) repair. Probably acts with NurA to stimulate resection of the 5' strand and produce the long 3' single-strand that is required for RadA loading. Has DNA-dependent ATPase activity and DNA helicase activity. The sequence is that of DNA double-strand break repair helicase HerA from Pyrococcus furiosus (strain ATCC 43587 / DSM 3638 / JCM 8422 / Vc1).